A 469-amino-acid chain; its full sequence is Argininosuccinate lyase (469 aa).

Belongs to the lyase 1 family. Argininosuccinate lyase subfamily.

The protein localises to the cytoplasm. It catalyses the reaction 2-(N(omega)-L-arginino)succinate = fumarate + L-arginine. Its pathway is amino-acid biosynthesis; L-arginine biosynthesis; L-arginine from L-ornithine and carbamoyl phosphate: step 3/3. In Burkholderia mallei (strain NCTC 10247), this protein is Argininosuccinate lyase.